A 173-amino-acid polypeptide reads, in one-letter code: MVRKPGSMYRNVRQRSFTRRKYMGGVPGSQVIHYDMGDKANTSFPVKISLIVEEKCQIRHTALEAARITANRHLVADTGKMGFYMKLRVYPHEVIRENKQATGAGADRVSSGMRRAFGKNVGTAARVKPMQKIFTVAVEKQNFKAAKEALWHAGQKLPTPCRIVVDEGAELVQ.

This sequence belongs to the universal ribosomal protein uL16 family.

In Methanosarcina acetivorans (strain ATCC 35395 / DSM 2834 / JCM 12185 / C2A), this protein is Large ribosomal subunit protein uL16.